Here is a 148-residue protein sequence, read N- to C-terminus: Large ribosomal subunit protein bL9 (148 aa).

Belongs to the bacterial ribosomal protein bL9 family.

Binds to the 23S rRNA. The sequence is that of Large ribosomal subunit protein bL9 from Pseudomonas putida (strain W619).